The primary structure comprises 386 residues: Short integuments 2, mitochondrial (386 aa).

A CP-type G domain is found at 37–207 (TRAIRNRLKL…VLDSPGVLVP (171 aa)). The short motif at 55-59 (DARIP) is the DARXP motif element. Positions 81–84 (NKKD) are G4. GTP contacts are provided by residues 81 to 84 (NKKD), 109 to 110 (NA), and 146 to 151 (NVGKSA). Residues 109–111 (NAH) are G5. The G1 stretch occupies residues 143 to 150 (GVPNVGKS). Residues 180–184 (GVTQD) are G2. Residues 200–203 (DSPG) are G3. Gly203 serves as a coordination point for GTP.

It belongs to the TRAFAC class YlqF/YawG GTPase family. MTG1 subfamily. Expressed in seedlings, roots, leaves, stems, inflorescences and siliques.

The protein localises to the mitochondrion. Functionally, GTPase that may function in mitochondrial ribosome assembly. Involved in a variety of growth processes during vegetative development and promotes growth and cell division in the developing integuments. This is Short integuments 2, mitochondrial from Arabidopsis thaliana (Mouse-ear cress).